A 157-amino-acid polypeptide reads, in one-letter code: uncharacterized protein (157 aa).

The region spanning 6 to 157 (HDELFQAIQQ…AFFNLWIKYM (152 aa)) is the HTH marR-type domain. Residues 66–89 (NSFLASRLHISKAAVSKAVHALLK) constitute a DNA-binding region (H-T-H motif).

It localises to the cytoplasm. This is an uncharacterized protein from Bacillus subtilis (strain 168).